The chain runs to 214 residues: Pyridoxine/pyridoxamine 5'-phosphate oxidase (214 aa).

Substrate is bound by residues 9-12 and Lys-68; that span reads RRSY. Residues 63–68, 78–79, Lys-85, and Gln-107 contribute to the FMN site; these read RVVLLK and YT. Substrate is bound by residues Tyr-125, Arg-129, and Ser-133. Residues 142–143 and Trp-187 contribute to the FMN site; that span reads QS. A substrate-binding site is contributed by 193–195; it reads RLH. Arg-197 contributes to the FMN binding site.

Belongs to the pyridoxamine 5'-phosphate oxidase family. In terms of assembly, homodimer. It depends on FMN as a cofactor.

It catalyses the reaction pyridoxamine 5'-phosphate + O2 + H2O = pyridoxal 5'-phosphate + H2O2 + NH4(+). The catalysed reaction is pyridoxine 5'-phosphate + O2 = pyridoxal 5'-phosphate + H2O2. It functions in the pathway cofactor metabolism; pyridoxal 5'-phosphate salvage; pyridoxal 5'-phosphate from pyridoxamine 5'-phosphate: step 1/1. It participates in cofactor metabolism; pyridoxal 5'-phosphate salvage; pyridoxal 5'-phosphate from pyridoxine 5'-phosphate: step 1/1. Catalyzes the oxidation of either pyridoxine 5'-phosphate (PNP) or pyridoxamine 5'-phosphate (PMP) into pyridoxal 5'-phosphate (PLP). This Christiangramia forsetii (strain DSM 17595 / CGMCC 1.15422 / KT0803) (Gramella forsetii) protein is Pyridoxine/pyridoxamine 5'-phosphate oxidase.